The primary structure comprises 187 residues: UPF0301 protein YqgE (187 aa).

The protein belongs to the UPF0301 (AlgH) family.

This is UPF0301 protein YqgE from Escherichia coli O127:H6 (strain E2348/69 / EPEC).